A 3374-amino-acid chain; its full sequence is PNEEAAAVRLSRGPAAERGFTIWPXAFVLQPKEKIVVSITWTPLKGGRVRETVTFLVNDILKHQAILLGNAEEPKKKKRTLWDTINKKKVSASSRHNKKVSNIQNVNKTFNVSPKADKVRSPLQACENLATNGNCSPPESNPLILEENKLPISPISPAFQECHRETCLPLHVRRSTTYTSLPASENGELEKADGANTAKDFHFNEKGITETSFDSIDNVNSQTEENGKLTLTPNYSSSLNITQSQGHFLSPDSFVNNSHASNNEPEFVKCLSPDMFVKGNTRPVLLESKRVHEICRKILSPDSFINDNYGLNEDLETESVNPILSPNQFLKDNIAYICISQQTCQLPLSTRRFQDSQPPQDERKNAAVPCISECQQLESPKATFEASKALEVMSNSYTFKKQNQPKFSAVQDISSHSREKPIKRRPILSATVTKRKPTCAVXNQMETVKPKAKRCLNVVVGDCEKETDDQKEKDDFHPLLPTRDLILSRPKSSKNIVTPPCKAASVARKRKSKGHTGDENVRVRVTECSEVQEVKRTHFSPLASKTSTVKHTHKVLTSSLKRVSHREKVNLKRKTDSLGYRTPTSKTNKRTRPFVPVAQSNLTFIKALKAGIPRHPMPFAAKNIFYDERWKEKQEQGFTWWLNFILTPDDFTVKTNISEVNASTLLLGVESQHKISVPKAPTKDEVSLRAYTARCRLNRLRRAACRLFTSEKMVKAMKKLEIEIEARRLIVRKDRHLWKDVGERQKVLNWLLSYNPLWLRIGLETIYGELVPLEDNSDVTGLAMFILNRLLWNPDIAAEYRHPSVPHLYRDGHEEALSKFTLKKLLLLVCFLDYAKISRLIDHDPCLFCKDAEFKASXDILLAFSRDFLGGEGDLSRHLSLLGFPVTHVQMPFDEFDFAVKNLAVDLQCGVRLVRTMELLTQNWNLSKKLRIPAISRLQKMHNVDIVLEILKSRGIQLNDEHGNAILSKDIVDRHREKTLALLWKIALAFQVDISLNLDQLKEEIDFLKKTQSMKKTMSALLCRPDAVISKKRDERHSGPFEQYSESVKLLMDWVNAVCGFYNKKVENFTVSFSDGRVLCYLIHHYHPCYVPFDAICQRTTQTVECTHTGSVVLNSSSESDGSFLDLSXKSPDQENTSELYKELLENEKKNFQLVRSAARDLGGIPAMIHHSDMSNTIPDEKVVITYLSFLCARLLDLRKETRAARLIQTTWRQYKLKKDLKHHQERDKAARIIQSAIINFLTKQRFKKKVSAALVIQKYWRRALAKRKLLMLKKEKLERVHSKSASIIQRYWRRYSTRKQFLKLKYYSIILQSKIRMIIAVASYKRYHWATVTIQXHWRAHVRSKQDRQRYELLRSSTLVIQSAFRRWRRHKRQSQINAAITLQRAFREWRVQKRAQEERAAVVIQSWYRMHRESQKYIHLRSCVIIIQARFRCFQAQKLYTRTRESILTLQKHYRAYVKGKVERTGYLQKRAAAIRLQAAFRGRRARNLCKQIRAACVLQSCWRMRQDRLRFLNLKKNIIRLQAHIRRRQQLQTYQKMKKAALVIQIHFRAYISAKEVLASYQKTRSAVIVLQSACRRMQARKKFLHILTAVVKIQSYYRAYASRRKFLRLKKATVKLQSIVRMKQARKQYLHLRAIAQQREEHLRASCIKLQAFLRGYLVRKQVRLQRKAAVLLQSYFRMRKMRLEYLKVCQAAVVIQRYYRAHRAGAQQRKHFLQVRRAVTCLQAAYRGYKVRRQLQQQSAAALKIQAAFRGYRQRTKYQSMLQSALKIQRWYRTRKMVSALRSHFFKTRTAAISLQSAYRGWKVRKQMRKEHEAAVKIQSAFRTARAQKEFRLLKTAASVIQQHLRARATGLRQRTEYMALRRAAVTLQSAWRGRAARRRIQKQQRCAIIIQACYRRHVQWKRWEIMKKAARLIQMHYRAYRTGRKQHHLFLKTKGAAIILQSAFRGVRARKKVKEMHQAATTIQSRYRAYQARKKYASYRAAAVIIQRWYRAAKLAGCQREEYLAVKKAALKIQAVYRGVRERRQTRRMHMAATLIKAAFKMQQSRRRYQQMRTAAIVIQVRYRAYRQGRAQRAKYLTTLKAVALLQAALRGARVRQNLRRMRTAATLIQAHYRGRRQQAYFNKLKKVTKTVQQKYRAGRERHAQLRRYNQLRRSAICIQAAFRGMRARKRLKAMHSAAAVIQRRFRTLVMRRRFLSLRKTAVWVQRKYRAKVCARHHLQQLQLQKAAIKIQSWYRGWMVRKKTQEMRRAATVLQAAFRRHRARARYQAWRRASQVIQQRFRAGQAARLQRRQYLQQXRSALVLQAAFRGMRIRRRLKRMHASATLIQSRFRSVRVRKRFLSLKKAAVFVQRKYRATICAKHHLQRFLELKKAIIIIQAFYRRRMVKKQLQEMHRAAALIQASFRMHRARLAFQTWKLAXVLIQQHYRAYRAAKLQRALYIRWRHSAVVIQAAYKGLKARQLLREKHRAAVIIQSTYRMYRQHFSYQKLQWATKVIQERYRVSKRKALQHDALKAAACARADFQDMVIRGLIQERQHQAAITVQKHFRAFKTRKRYLHFRAKVVFVQRRYRVLMAVRTQAAICIQSCFRGFKARRGIQGMHLAATRIQSCYRRHRARADYQAKKRAVVVIQNHYRSYVRVKMERKEFLAIQKSARTIQAAFRGMKVRQKLKTMPDEKMAAPATRPAFYCHRTESQHEAGQSPALVAQGLYKTSLVGPSQETEHHSQRKAAVTIQKAFRKMVTRRLEKQRSAAVQIQSFLQMAVYRRRFLQQKRAALTLQRYFRTQQSRKRFLLYREAAVGLQNPHRAFLPAKHQRELYSQIRSSVIIIQARVKGFIQKRKFRKLKDSTIKIQAVWRRHKARKYLREVKAACRIQAWYRCRKARKEYLAVLRAVRIIQRCFCTQQQRRRFLNVRASAVIIQRRWRAVLSGRTTHEQSLMTKRHQAACLIQANFRGYKARQVFLQQKSAALTIQRFIRARKAGKHQRMKYVELKKSTVVLQALVRGWLVRKRISEQRAKIRLLHFAAAAFYHLSALRIQRAYRRHMALKNANNKQLNSAICIQRWFRARSQRKRFLQKYSIVNIQREAREQASQHSRAASVIQRAVRHFLLRKKQENLNKRIAKIQALWRGYSWRKKNDTSKTKAIRQRLQCVNREIREENKLYHRTVFALHHLLTYKYLSTVLEALKHLEAVTRLSSVCCEKMAQSGAISKVFVLIRSCNRSVPCMEVIRYAVQVLLNVAKYEKTTSAIYBVENCVDTLLELLQMYQEKSGDKVADKSRSIFTKTCCLLAVLLKTTTRASDVQSRSKVVDRIYSLYKLTAHKHKVNTERILCKQKKNSSVSLSFFPETPVRTRMVSRLKPDWVLRRDNV.

4 positions are modified to phosphoserine: serine 212, serine 215, serine 300, and serine 325. Residues 492–518 (SSKNIVTPPCKAASVARKRKSKGHTGD) are disordered. Serine 540 is subject to Phosphoserine. The Calponin-homology (CH) 1 domain occupies 855-991 (KASXDILLAF…LLWKIALAFQ (137 aa)). Positions 992-1013 (VDISLNLDQLKEEIDFLKKTQS) form a coiled coil. Residue serine 1038 is modified to Phosphoserine. The region spanning 1045 to 1196 (SESVKLLMDW…YLSFLCARLL (152 aa)) is the Calponin-homology (CH) 2 domain. IQ domains lie at 1201-1230 (ETRA…RDKA), 1282-1313 (HSKS…IILQ), 1472-1503 (KRAA…VLQS), 1567-1596 (TRSA…AVVK), 1590-1619 (ILTA…ATVK), 1613-1642 (LKKA…IAQQ), 1647-1678 (LRAS…VLLQ), 1720-1749 (VRRA…AALK), 1743-1772 (QSAA…SALK), 1793-1822 (TRTA…AAVK), 1816-1847 (EHEA…SVIQ), 1866-1897 (LRRA…IIIQ), 1939-1968 (TKGA…AATT), 1962-1993 (MHQA…VIIQ), 2012-2043 (VKKA…TLIK), 2035-2066 (MHMA…IVIQ), 2085-2116 (TLKA…TLIQ), 2108-2137 (MRTA…VTKT), 2158-2189 (LRRS…AVIQ), 2181-2212 (MHSA…VWVQ), 2230-2261 (LQKA…TVLQ), 2253-2284 (MRRA…QVIQ), 2303-2334 (QXRS…TLIQ), 2326-2357 (MHAS…VFVQ), 2376-2407 (LKKA…ALIQ), 2399-2430 (MHRA…VLIQ), 2449-2480 (WRHS…VIIQ), 2472-2503 (KHRA…KVIQ), 2542-2573 (QHQA…VFVQ), 2583-2612 (RTQA…AATR), 2606-2637 (MHLA…VVIQ), 2656-2685 (IQKS…EKMA), 2732-2763 (QRKA…QIQS), 2777-2806 (QKRA…AAVG), 2827-2856 (IRSS…STIK), 2850-2881 (LKDS…RIQA), 2872-2903 (EVKA…RIIQ), 2947-2976 (RHQA…AALT), 2997-3028 (LKKS…RLLH), 3099-3128 (HSRA…RIAK), and 3122-3153 (LNKR…IRQR).

Its subcellular location is the cytoplasm. The protein localises to the cytoskeleton. The protein resides in the spindle. It localises to the nucleus. Functionally, probable role in mitotic spindle regulation and coordination of mitotic processes. May have a preferential role in regulating neurogenesis. This is Abnormal spindle-like microcephaly-associated protein homolog (ASPM) from Ovis aries (Sheep).